We begin with the raw amino-acid sequence, 378 residues long: Dual-specificity RNA methyltransferase RlmN (378 aa).

The active-site Proton acceptor is the E95. Positions 101-345 (EETRGTLCVS…TTIRKTRGDD (245 aa)) constitute a Radical SAM core domain. C108 and C350 are joined by a disulfide. The [4Fe-4S] cluster site is built by C115, C119, and C122. S-adenosyl-L-methionine-binding positions include 176–177 (GE), S208, 230–232 (SLH), and N307. Residue C350 is the S-methylcysteine intermediate of the active site.

Belongs to the radical SAM superfamily. RlmN family. [4Fe-4S] cluster is required as a cofactor.

The protein localises to the cytoplasm. It catalyses the reaction adenosine(2503) in 23S rRNA + 2 reduced [2Fe-2S]-[ferredoxin] + 2 S-adenosyl-L-methionine = 2-methyladenosine(2503) in 23S rRNA + 5'-deoxyadenosine + L-methionine + 2 oxidized [2Fe-2S]-[ferredoxin] + S-adenosyl-L-homocysteine. The catalysed reaction is adenosine(37) in tRNA + 2 reduced [2Fe-2S]-[ferredoxin] + 2 S-adenosyl-L-methionine = 2-methyladenosine(37) in tRNA + 5'-deoxyadenosine + L-methionine + 2 oxidized [2Fe-2S]-[ferredoxin] + S-adenosyl-L-homocysteine. Functionally, specifically methylates position 2 of adenine 2503 in 23S rRNA and position 2 of adenine 37 in tRNAs. m2A2503 modification seems to play a crucial role in the proofreading step occurring at the peptidyl transferase center and thus would serve to optimize ribosomal fidelity. The protein is Dual-specificity RNA methyltransferase RlmN of Burkholderia thailandensis (strain ATCC 700388 / DSM 13276 / CCUG 48851 / CIP 106301 / E264).